The chain runs to 509 residues: Lysine--tRNA ligase (509 aa).

Mg(2+)-binding residues include glutamate 395 and glutamate 402.

This sequence belongs to the class-II aminoacyl-tRNA synthetase family. Homodimer. Mg(2+) is required as a cofactor.

Its subcellular location is the cytoplasm. It catalyses the reaction tRNA(Lys) + L-lysine + ATP = L-lysyl-tRNA(Lys) + AMP + diphosphate. In Fervidobacterium nodosum (strain ATCC 35602 / DSM 5306 / Rt17-B1), this protein is Lysine--tRNA ligase.